The chain runs to 374 residues: Carnitine monooxygenase oxygenase subunit (374 aa).

Residues 47 to 155 enclose the Rieske domain; that stretch reads WICVAHSSEL…LEEYAGFVFI (109 aa). [2Fe-2S] cluster is bound by residues cysteine 89, histidine 91, cysteine 109, and histidine 112. 3 residues coordinate Fe cation: histidine 211, histidine 216, and aspartate 325.

Belongs to the bacterial ring-hydroxylating dioxygenase alpha subunit family. CntA subfamily. Composed of an oxygenase subunit and a reductase subunit. The cofactor is [2Fe-2S] cluster. Requires Fe cation as cofactor.

The enzyme catalyses (R)-carnitine + NADH + O2 + H(+) = (3R)-3-hydroxy-4-oxobutanoate + trimethylamine + NAD(+) + H2O. The catalysed reaction is (R)-carnitine + NADPH + O2 + H(+) = (3R)-3-hydroxy-4-oxobutanoate + trimethylamine + NADP(+) + H2O. The protein operates within amine and polyamine metabolism; carnitine metabolism. Converts carnitine to trimethylamine and malic semialdehyde. The protein is Carnitine monooxygenase oxygenase subunit (yeaW) of Escherichia coli O157:H7.